The sequence spans 278 residues: 3-methyl-2-oxobutanoate hydroxymethyltransferase (278 aa).

Positions 43 and 82 each coordinate Mg(2+). Residues 43–44 (DS), Asp82, and Lys112 each bind 3-methyl-2-oxobutanoate. Glu114 provides a ligand contact to Mg(2+). Catalysis depends on Glu181, which acts as the Proton acceptor.

Belongs to the PanB family. In terms of assembly, homodecamer; pentamer of dimers. Mg(2+) serves as cofactor.

It localises to the cytoplasm. The enzyme catalyses 3-methyl-2-oxobutanoate + (6R)-5,10-methylene-5,6,7,8-tetrahydrofolate + H2O = 2-dehydropantoate + (6S)-5,6,7,8-tetrahydrofolate. It participates in cofactor biosynthesis; (R)-pantothenate biosynthesis; (R)-pantoate from 3-methyl-2-oxobutanoate: step 1/2. Functionally, catalyzes the reversible reaction in which hydroxymethyl group from 5,10-methylenetetrahydrofolate is transferred onto alpha-ketoisovalerate to form ketopantoate. The sequence is that of 3-methyl-2-oxobutanoate hydroxymethyltransferase from Desulfitobacterium hafniense (strain DSM 10664 / DCB-2).